Consider the following 396-residue polypeptide: Ribosomal RNA large subunit methyltransferase I (396 aa).

In terms of domain architecture, PUA spans 2–79; the sequence is AVRIKLKPGR…REEEIDREFF (78 aa).

Belongs to the methyltransferase superfamily. RlmI family.

Its subcellular location is the cytoplasm. The enzyme catalyses cytidine(1962) in 23S rRNA + S-adenosyl-L-methionine = 5-methylcytidine(1962) in 23S rRNA + S-adenosyl-L-homocysteine + H(+). Functionally, specifically methylates the cytosine at position 1962 (m5C1962) of 23S rRNA. This Shewanella sp. (strain MR-7) protein is Ribosomal RNA large subunit methyltransferase I.